The primary structure comprises 159 residues: Transcription elongation factor GreA (159 aa).

A coiled-coil region spans residues 44–75 (SENAEYDAAREQQSQTEARIADLENKLSTATI).

This sequence belongs to the GreA/GreB family.

Its function is as follows. Necessary for efficient RNA polymerase transcription elongation past template-encoded arresting sites. The arresting sites in DNA have the property of trapping a certain fraction of elongating RNA polymerases that pass through, resulting in locked ternary complexes. Cleavage of the nascent transcript by cleavage factors such as GreA or GreB allows the resumption of elongation from the new 3'terminus. GreA releases sequences of 2 to 3 nucleotides. This is Transcription elongation factor GreA from Chlorobium limicola (strain DSM 245 / NBRC 103803 / 6330).